Here is a 231-residue protein sequence, read N- to C-terminus: NADH-ubiquinone oxidoreductase chain 4 (231 aa).

Transmembrane regions (helical) follow at residues 1–21, 34–54, 61–80, 84–106, 118–138, and 156–178; these read PIAG…YGII, TFLP…LTCL, SLIA…AIII, WGLS…LFCL, ILIL…WWLL, and LLIM…LSML.

This sequence belongs to the complex I subunit 4 family.

It localises to the mitochondrion membrane. The catalysed reaction is a ubiquinone + NADH + 5 H(+)(in) = a ubiquinol + NAD(+) + 4 H(+)(out). Functionally, core subunit of the mitochondrial membrane respiratory chain NADH dehydrogenase (Complex I) that is believed to belong to the minimal assembly required for catalysis. Complex I functions in the transfer of electrons from NADH to the respiratory chain. The immediate electron acceptor for the enzyme is believed to be ubiquinone. The chain is NADH-ubiquinone oxidoreductase chain 4 (MT-ND4) from Trimeresurus albolabris (White-lipped pit viper).